We begin with the raw amino-acid sequence, 498 residues long: ATP synthase subunit beta, chloroplastic (498 aa).

172–179 (GGAGVGKT) lines the ATP pocket.

It belongs to the ATPase alpha/beta chains family. F-type ATPases have 2 components, CF(1) - the catalytic core - and CF(0) - the membrane proton channel. CF(1) has five subunits: alpha(3), beta(3), gamma(1), delta(1), epsilon(1). CF(0) has four main subunits: a(1), b(1), b'(1) and c(9-12).

Its subcellular location is the plastid. The protein resides in the chloroplast thylakoid membrane. The catalysed reaction is ATP + H2O + 4 H(+)(in) = ADP + phosphate + 5 H(+)(out). In terms of biological role, produces ATP from ADP in the presence of a proton gradient across the membrane. The catalytic sites are hosted primarily by the beta subunits. The polypeptide is ATP synthase subunit beta, chloroplastic (Nymphaea odorata (White water lily)).